A 407-amino-acid polypeptide reads, in one-letter code: NAD(P)H-quinone oxidoreductase subunit 1 (407 aa).

The next 9 membrane-spanning stretches (helical) occupy residues 28-48 (WLPL…IAAV), 96-116 (WLFT…YLVI), 127-147 (ITIG…GALM), 175-195 (LALS…VDIV), 203-223 (LFSF…IFLI), 267-287 (LILA…FIVP), 309-329 (ALVG…LAIL), 347-367 (WKFL…LVLL), and 374-394 (TLPL…AMSL).

It belongs to the complex I subunit 1 family. In terms of assembly, NDH-1 is composed of at least 11 different subunits.

The protein localises to the cell inner membrane. The catalysed reaction is a plastoquinone + NADH + (n+1) H(+)(in) = a plastoquinol + NAD(+) + n H(+)(out). It catalyses the reaction a plastoquinone + NADPH + (n+1) H(+)(in) = a plastoquinol + NADP(+) + n H(+)(out). Its function is as follows. NDH-1 shuttles electrons from an unknown electron donor, via FMN and iron-sulfur (Fe-S) centers, to quinones in the respiratory and/or the photosynthetic chain. The immediate electron acceptor for the enzyme in this species is believed to be plastoquinone. Couples the redox reaction to proton translocation, and thus conserves the redox energy in a proton gradient. This chain is NAD(P)H-quinone oxidoreductase subunit 1, found in Gloeobacter violaceus (strain ATCC 29082 / PCC 7421).